Reading from the N-terminus, the 1188-residue chain is AT-rich interactive domain-containing protein 5B (1188 aa).

Residue lysine 130 forms a Glycyl lysine isopeptide (Lys-Gly) (interchain with G-Cter in SUMO2) linkage. The segment at 251-278 (RPRKKKTCPQRRDSFSGSKDPNNNCDGK) is disordered. Serine 264 is modified (phosphoserine). Residues 265-275 (FSGSKDPNNNC) are compositionally biased toward polar residues. The ARID domain occupies 319-411 (RADEQAFLVA…LILPYERFIK (93 aa)). Lysine 337 bears the N6,N6-dimethyllysine mark. The tract at residues 413-614 (EEDKPLPPIK…LTSQNEAEEE (202 aa)) is disordered. Basic and acidic residues-rich tracts occupy residues 445-459 (IKQE…KENT), 470-484 (SEQR…HKSA), 493-504 (VKGKPEGHKDLG), and 526-535 (SEKEAEEMGD). A Glycyl lysine isopeptide (Lys-Gly) (interchain with G-Cter in SUMO2) cross-link involves residue lysine 446. Residues lysine 494 and lysine 496 each participate in a glycyl lysine isopeptide (Lys-Gly) (interchain with G-Cter in SUMO2) cross-link. A compositionally biased stretch (polar residues) spans 594 to 609 (PFSSFSATKPPLTSQN). Glycyl lysine isopeptide (Lys-Gly) (interchain with G-Cter in SUMO2) cross-links involve residues lysine 767, lysine 774, lysine 803, lysine 810, lysine 893, lysine 916, lysine 920, and lysine 935. The disordered stretch occupies residues 958–978 (SPMTMSGPKKYPESLARSGKP). Glycyl lysine isopeptide (Lys-Gly) (interchain with G-Cter in SUMO2) cross-links involve residues lysine 988, lysine 1000, and lysine 1013. The disordered stretch occupies residues 1030-1066 (AVSPLDPAKEASGKEKASEQESEGNKGAYGGHSGAAS). Serine 1032 carries the post-translational modification Phosphoserine. Residues 1036-1048 (PAKEASGKEKASE) show a composition bias toward basic and acidic residues. Residues lysine 1055 and lysine 1070 each participate in a glycyl lysine isopeptide (Lys-Gly) (interchain with G-Cter in SUMO2) cross-link. Position 1133 is a phosphoserine (serine 1133).

Belongs to the ARID5B family. In terms of processing, methylation at Lys-337 prevents DNA-binding. Demethylation by PHF2 promotes recruitment of the PHF2-ARID5B complex to promoters. Widely expressed. Expressed in lung, heart, small intestine, kidney, muscle and brain. Also expressed in spleen, thymus, endocrine organs and in uterus and testis.

The protein localises to the nucleus. Transcription coactivator that binds to the 5'-AATA[CT]-3' core sequence and plays a key role in adipogenesis and liver development. Acts by forming a complex with phosphorylated PHF2, which mediates demethylation at Lys-337, leading to target the PHF2-ARID5B complex to target promoters, where PHF2 mediates demethylation of dimethylated 'Lys-9' of histone H3 (H3K9me2), followed by transcription activation of target genes. The PHF2-ARID5B complex acts as a coactivator of HNF4A in liver. Required for adipogenesis: regulates triglyceride metabolism in adipocytes by regulating expression of adipogenic genes. Overexpression leads to induction of smooth muscle marker genes, suggesting that it may also act as a regulator of smooth muscle cell differentiation and proliferation. The protein is AT-rich interactive domain-containing protein 5B (Arid5b) of Mus musculus (Mouse).